A 320-amino-acid polypeptide reads, in one-letter code: Putative protein FRMPD2-like (320 aa).

2 consecutive PDZ domains span residues 1-46 (MTSI…ERRV) and 90-178 (EVKL…CRPP). The segment at 215 to 239 (DQEDSWRDSASPDAGEGLGLRPESS) is disordered.

The chain is Putative protein FRMPD2-like from Homo sapiens (Human).